A 313-amino-acid chain; its full sequence is Ribosomal RNA small subunit methyltransferase H (313 aa).

Residues 35–37 (GGH), Asp-55, Phe-80, Asp-102, and Gln-109 contribute to the S-adenosyl-L-methionine site.

The protein belongs to the methyltransferase superfamily. RsmH family.

Its subcellular location is the cytoplasm. The catalysed reaction is cytidine(1402) in 16S rRNA + S-adenosyl-L-methionine = N(4)-methylcytidine(1402) in 16S rRNA + S-adenosyl-L-homocysteine + H(+). In terms of biological role, specifically methylates the N4 position of cytidine in position 1402 (C1402) of 16S rRNA. In Shewanella frigidimarina (strain NCIMB 400), this protein is Ribosomal RNA small subunit methyltransferase H.